Reading from the N-terminus, the 408-residue chain is 4-O-methyl-glucuronoyl methylesterase 1 (408 aa).

The N-terminal stretch at 1–19 (MASSSRFAALLLLALPALA) is a signal peptide. Disulfide bonds link Cys-31–Cys-65, Cys-218–Cys-354, and Cys-250–Cys-326. The GXSYXG catalytic site motif signature appears at 217 to 222 (GCSRDG). Ser-219 (nucleophile) is an active-site residue. The substrate site is built by Lys-223, Gln-265, and Glu-273. The N-linked (GlcNAc...) asparagine glycan is linked to Asn-287. Position 317 (Trp-317) interacts with substrate. Asn-350 carries N-linked (GlcNAc...) asparagine glycosylation. The Proton donor/acceptor role is filled by His-353. Asn-390, Asn-395, and Asn-401 each carry an N-linked (GlcNAc...) asparagine glycan.

It belongs to the carbohydrate esterase 15 (CE15) family.

It localises to the secreted. The enzyme catalyses a 4-O-methyl-alpha-D-glucuronosyl ester derivative + H2O = 4-O-methyl-alpha-D-glucuronate derivative + an alcohol + H(+). In terms of biological role, glucuronoyl esterase which may play a significant role in biomass degradation, as it is considered to disconnect hemicellulose from lignin through the hydrolysis of the ester bond between 4-O-methyl-D-glucuronic acid residues of glucuronoxylans and aromatic alcohols of lignin. Can hydrolyze benzyl glucuronic acid (BnGlcA), allyl glucuronic acid (allylGlcA) and to a lower degree methyl glucuronic acid (MeGlcA) in vitro. The polypeptide is 4-O-methyl-glucuronoyl methylesterase 1 (Wolfiporia cocos (strain MD-104) (Brown rot fungus)).